A 1770-amino-acid polypeptide reads, in one-letter code: Vitellogenin (1770 aa).

A signal peptide spans 1 to 16 (MLLLLTLLLFAGTVAA). The Vitellogenin domain maps to 22-809 (WQVGNEYTYL…SEDSVIPRIL (788 aa)). The cysteines at positions 178 and 222 are disulfide-linked. N-linked (GlcNAc...) asparagine glycosylation occurs at asparagine 296. A disordered region spans residues 373-394 (SSSSSISSSEENDFWQPKPTLE). Residue asparagine 1067 is glycosylated (N-linked (GlcNAc...) asparagine). In terms of domain architecture, VWFD spans 1442 to 1635 (TSCMLDKTRA…SYALISNQCE (194 aa)). Cystine bridges form between cysteine 1444–cysteine 1598 and cysteine 1466–cysteine 1634.

Accumulates in the hemolymph. Represents up to 70% of the queen's hemolymph proteins. During the first week of the worker adult life, when it becomes a nurse bee and performs brood-rearing tasks, the vitellogenin titer increases and may account for up to 40% of the total hemolymph proteins.

The protein resides in the secreted. Precursor of the egg-yolk proteins that are sources of nutrients during embryonic development. Involved in the differentiation of honeybee larvae into queens. The sequence is that of Vitellogenin (Vg) from Apis mellifera (Honeybee).